A 362-amino-acid chain; its full sequence is MGQSVSRDDFIWTLTEQPHMSRREEIVKKYPEVKKLFGVDPSLKYVVSSLVIFQIFMCWLLQDADWILIILEAYFCGGIINHAMTLAIHDISHNTAFGNKYPLKNRFFGMWANLPIAVPISVSFKKYHVEHHRYLGEDGLDTDVPTTFEAEFFTTAPRKLLWLALQPFFYGFRPLIIYKKAPTDMEILNAIIQISFDLLILHFFGVKSLFYLLFGTIISMGLHPSAGHFISEHYAFKEDQETFSYYGLWNLCTFNVGYHVEHHDFPYIPGRDLPKLRAMAPEYYENLLKHTSMMQILTEFVVNPAMGPYARLKRKPRVAQEFYGNYQLFEYVEGFLHHIGVYRLQKFAVNVFDLNNNSKKLN.

The next 3 helical transmembrane spans lie at 45 to 61, 71 to 91, and 107 to 127; these read YVVS…CWLL, LEAY…IHDI, and FFGM…FKKY. A Histidine box-1 motif is present at residues 89-93; sequence HDISH. Positions 128-132 match the Histidine box-2 motif; sequence HVEHH. Transmembrane regions (helical) follow at residues 160-177 and 198-218; these read LLWL…PLII and LLIL…GTII. The Histidine box-3 motif lies at 259–263; that stretch reads HVEHH.

This sequence belongs to the fatty acid desaturase type 1 family. DEGS subfamily.

The protein resides in the membrane. It carries out the reaction an N-acyl-15-methylhexadecasphinganine + 2 Fe(II)-[cytochrome b5] + O2 + 2 H(+) = an N-acyl-4-hydroxy-15-methylhexadecasphinganine + 2 Fe(III)-[cytochrome b5] + H2O. The enzyme catalyses an N-acyl-15-methylhexadecasphinganine + 2 Fe(II)-[cytochrome b5] + O2 + 2 H(+) = an N-acyl-15-methylhexadecasphing-4-enine + 2 Fe(III)-[cytochrome b5] + 2 H2O. It catalyses the reaction a dihydroceramide + 2 Fe(II)-[cytochrome b5] + O2 + 2 H(+) = a phytoceramide + 2 Fe(III)-[cytochrome b5] + H2O. The catalysed reaction is an N-acylsphinganine + 2 Fe(II)-[cytochrome b5] + O2 + 2 H(+) = an N-acylsphing-4-enine + 2 Fe(III)-[cytochrome b5] + 2 H2O. It carries out the reaction N-octanoylsphinganine + 2 Fe(II)-[cytochrome b5] + O2 + 2 H(+) = N-octanoyl-4-hydroxysphinganine + 2 Fe(III)-[cytochrome b5] + H2O. The enzyme catalyses an N-acylsphinganine + 2 Fe(II)-[cytochrome b5] + O2 + 2 H(+) = an N-acyl-(4R)-4-hydroxysphinganine + 2 Fe(III)-[cytochrome b5] + H2O. Its pathway is lipid metabolism; sphingolipid metabolism. In terms of biological role, bifunctional enzyme which acts both as a sphingolipid delta(4)-desaturase and a sphingolipid C4-monooxygenase. C.elegans contain specific sphingoid bases, which are unique or different in structure compared to the sphingoid bases found in other animals. Two examples of these distinctive compounds are: 15-methylhexadecasphinganine and 15-methylhexadecasphing-4-enine and this enzyme can catalyze their conversion. The protein is Putative sphingolipid delta(4)-desaturase/C4-monooxygenase (ttm-5) of Caenorhabditis elegans.